The following is a 268-amino-acid chain: Ribosomal RNA small subunit methyltransferase A (268 aa).

S-adenosyl-L-methionine contacts are provided by N18, L20, G45, E66, D91, and N112.

Belongs to the class I-like SAM-binding methyltransferase superfamily. rRNA adenine N(6)-methyltransferase family. RsmA subfamily.

It localises to the cytoplasm. The catalysed reaction is adenosine(1518)/adenosine(1519) in 16S rRNA + 4 S-adenosyl-L-methionine = N(6)-dimethyladenosine(1518)/N(6)-dimethyladenosine(1519) in 16S rRNA + 4 S-adenosyl-L-homocysteine + 4 H(+). In terms of biological role, specifically dimethylates two adjacent adenosines (A1518 and A1519) in the loop of a conserved hairpin near the 3'-end of 16S rRNA in the 30S particle. May play a critical role in biogenesis of 30S subunits. In Vibrio vulnificus (strain CMCP6), this protein is Ribosomal RNA small subunit methyltransferase A.